We begin with the raw amino-acid sequence, 414 residues long: Glutamyl-tRNA reductase (414 aa).

Residues threonine 47–arginine 50, serine 106, glutamate 111–glutamine 113, and glutamine 117 contribute to the substrate site. Cysteine 48 acts as the Nucleophile in catalysis. Glycine 185–glycine 190 serves as a coordination point for NADP(+).

The protein belongs to the glutamyl-tRNA reductase family. In terms of assembly, homodimer.

It carries out the reaction (S)-4-amino-5-oxopentanoate + tRNA(Glu) + NADP(+) = L-glutamyl-tRNA(Glu) + NADPH + H(+). The protein operates within porphyrin-containing compound metabolism; protoporphyrin-IX biosynthesis; 5-aminolevulinate from L-glutamyl-tRNA(Glu): step 1/2. Catalyzes the NADPH-dependent reduction of glutamyl-tRNA(Glu) to glutamate 1-semialdehyde (GSA). The chain is Glutamyl-tRNA reductase from Herpetosiphon aurantiacus (strain ATCC 23779 / DSM 785 / 114-95).